The chain runs to 202 residues: MTIWLGSQPLVLASQSYARQMLLQNAGIPFEAIPAAIDERGVQQASGLTSPAEIAARLAEEKALAVSQRLPGRLVLGADQTLALGERTFNKPADRAKATAQLRTLSGRRHELHSAIALVRNGKTVFAETSVARMTMRQLTEAEIEAYLNEAGDAATSSVGGYQVEGLGVHLFDGIHGDHFTILGLPLVPLLNYLRQQRLLAF.

Aspartate 79 (proton acceptor) is an active-site residue.

It belongs to the Maf family. Requires a divalent metal cation as cofactor.

Its subcellular location is the cytoplasm. It catalyses the reaction a ribonucleoside 5'-triphosphate + H2O = a ribonucleoside 5'-phosphate + diphosphate + H(+). The catalysed reaction is a 2'-deoxyribonucleoside 5'-triphosphate + H2O = a 2'-deoxyribonucleoside 5'-phosphate + diphosphate + H(+). Nucleoside triphosphate pyrophosphatase. May have a dual role in cell division arrest and in preventing the incorporation of modified nucleotides into cellular nucleic acids. The chain is Nucleoside triphosphate pyrophosphatase from Rhodopseudomonas palustris (strain BisB18).